The sequence spans 99 residues: Large ribosomal subunit protein bL27 (99 aa).

Residues Ala-13–Gly-65 are disordered.

The protein belongs to the bacterial ribosomal protein bL27 family.

This is Large ribosomal subunit protein bL27 from Lactobacillus delbrueckii subsp. bulgaricus (strain ATCC BAA-365 / Lb-18).